The sequence spans 369 residues: Probable dual-specificity RNA methyltransferase RlmN (369 aa).

E108 acts as the Proton acceptor in catalysis. The region spanning 114-351 is the Radical SAM core domain; the sequence is YPDRATLCIS…LAQGVSCTVR (238 aa). The cysteines at positions 121 and 362 are disulfide-linked. Positions 128, 132, and 135 each coordinate [4Fe-4S] cluster. S-adenosyl-L-methionine is bound by residues 183–184, S217, 240–242, and N319; these read GE and SLH. Residue C362 is the S-methylcysteine intermediate of the active site.

This sequence belongs to the radical SAM superfamily. RlmN family. The cofactor is [4Fe-4S] cluster.

The protein resides in the cytoplasm. The catalysed reaction is adenosine(2503) in 23S rRNA + 2 reduced [2Fe-2S]-[ferredoxin] + 2 S-adenosyl-L-methionine = 2-methyladenosine(2503) in 23S rRNA + 5'-deoxyadenosine + L-methionine + 2 oxidized [2Fe-2S]-[ferredoxin] + S-adenosyl-L-homocysteine. It carries out the reaction adenosine(37) in tRNA + 2 reduced [2Fe-2S]-[ferredoxin] + 2 S-adenosyl-L-methionine = 2-methyladenosine(37) in tRNA + 5'-deoxyadenosine + L-methionine + 2 oxidized [2Fe-2S]-[ferredoxin] + S-adenosyl-L-homocysteine. Its function is as follows. Specifically methylates position 2 of adenine 2503 in 23S rRNA and position 2 of adenine 37 in tRNAs. In Rhodococcus jostii (strain RHA1), this protein is Probable dual-specificity RNA methyltransferase RlmN.